We begin with the raw amino-acid sequence, 588 residues long: Sulfite reductase [NADPH] hemoprotein beta-component (588 aa).

The [4Fe-4S] cluster site is built by Cys-442, Cys-448, Cys-487, and Cys-491. Cys-491 lines the siroheme pocket.

This sequence belongs to the nitrite and sulfite reductase 4Fe-4S domain family. As to quaternary structure, alpha(8)-beta(8). The alpha component is a flavoprotein, the beta component is a hemoprotein. Siroheme serves as cofactor. The cofactor is [4Fe-4S] cluster.

It carries out the reaction hydrogen sulfide + 3 NADP(+) + 3 H2O = sulfite + 3 NADPH + 4 H(+). The protein operates within sulfur metabolism; hydrogen sulfide biosynthesis; hydrogen sulfide from sulfite (NADPH route): step 1/1. Component of the sulfite reductase complex that catalyzes the 6-electron reduction of sulfite to sulfide. This is one of several activities required for the biosynthesis of L-cysteine from sulfate. This is Sulfite reductase [NADPH] hemoprotein beta-component from Actinobacillus pleuropneumoniae serotype 7 (strain AP76).